The following is a 528-amino-acid chain: Phosphoenolpyruvate carboxykinase (ATP) (528 aa).

Positions 56, 192, and 198 each coordinate substrate. Residues Lys-198, His-217, and 233-241 (GLSGTGKTT) contribute to the ATP site. Positions 198 and 217 each coordinate Mn(2+). Residue Asp-254 participates in Mn(2+) binding. ATP-binding residues include Glu-282, Arg-319, and Thr-444. Arg-319 is a binding site for substrate.

It belongs to the phosphoenolpyruvate carboxykinase (ATP) family. Mn(2+) is required as a cofactor.

The protein localises to the cytoplasm. It carries out the reaction oxaloacetate + ATP = phosphoenolpyruvate + ADP + CO2. Its pathway is carbohydrate biosynthesis; gluconeogenesis. In terms of biological role, involved in the gluconeogenesis. Catalyzes the conversion of oxaloacetate (OAA) to phosphoenolpyruvate (PEP) through direct phosphoryl transfer between the nucleoside triphosphate and OAA. The chain is Phosphoenolpyruvate carboxykinase (ATP) from Bacillus cereus (strain ATCC 10987 / NRS 248).